The primary structure comprises 609 residues: Membrane-bound O-acyltransferase GUP2 (609 aa).

An N-terminal signal peptide occupies residues 1-18 (MSMLRIWSCIVHFFSVQA). The Lumenal segment spans residues 19 to 75 (LDSRIKPDIEFKRRQRIFINSSKEENGSSSSAVTVTRNPVLSSNSPSPPLWNTWEFR). Residues 76 to 96 (LYYLAFTVVVPFMIKAALATS) form a helical membrane-spanning segment. Topologically, residues 97-133 (SESNPNYYKFSGLLAHGWILGRKVDNSDPQYRFFRSN) are cytoplasmic. A helical transmembrane segment spans residues 134-154 (FFLLAILILLQIILKKVFVKF). At 155 to 169 (SKIPKTKFDFACGLV) the chain is on the lumenal side. A helical transmembrane segment spans residues 170 to 190 (FVCFMYGINSVKLFTHAFIFF). Topologically, residues 191 to 200 (TLAHSLKRKR) are cytoplasmic. A helical transmembrane segment spans residues 201–221 (LIAAFAIWSYGIFTLFINQKM). Residues 222 to 324 (KNLPFNNIAI…VAEHHIQDYN (103 aa)) are Lumenal-facing. The chain crosses the membrane as a helical span at residues 325 to 345 (FINFIAYITYAPLFLVGPIIT). Residues 346 to 371 (FNDYLYQSENKLPSLTKKNIGFYALK) lie on the Cytoplasmic side of the membrane. A helical membrane pass occupies residues 372 to 392 (VFSSLLLMEIILHYIYVGAIA). Residues 393 to 406 (RTKAWNNDTPLQQA) lie on the Lumenal side of the membrane. The chain crosses the membrane as a helical span at residues 407-427 (MIALFNLNIMYLKLLIPWRLF). Topologically, residues 428–474 (RLWAMVDGIDAPENMLRCVDNNYSTVGFWRAWHTSFNKWVIRYIYVP) are cytoplasmic. The chain crosses the membrane as a helical span at residues 475–495 (FGGSNNKILTSFAVFSFVAIW). His-496 is an active-site residue. Over 496–502 (HDIQLRV) the chain is Lumenal. The chain crosses the membrane as a helical span at residues 503–523 (LFWGWLTVLLLLGETYITNCF). Residues 524–533 (SRYRFRSWYR) are Cytoplasmic-facing. A helical transmembrane segment spans residues 534–554 (FVCGIGAAINICMMMIINVYG). Residues 555–575 (FCLGAEGTKLLLKGIFNNSHS) lie on the Lumenal side of the membrane. A helical membrane pass occupies residues 576–596 (PEFLTAVMVSLFIAVQVMFEI). Over 597-609 (REEEKRHGINLKC) the chain is Cytoplasmic.

Belongs to the membrane-bound acyltransferase family.

It localises to the endoplasmic reticulum membrane. Its function is as follows. Probable membrane-bound O-acyltransferase. Together with GUP1, has an influence on the chemical composition of the yeast extracellular matrix (yECM) in yeast multicellular aggregates, such as biofilms and colonies. The polypeptide is Membrane-bound O-acyltransferase GUP2 (GUP2) (Saccharomyces cerevisiae (strain ATCC 204508 / S288c) (Baker's yeast)).